Here is a 2219-residue protein sequence, read N- to C-terminus: RNA-directed RNA polymerase L (2219 aa).

The endonuclease stretch occupies residues 26–289 (KLAFLVQTEP…TTEDDVEYLI (264 aa)). 3 residues coordinate Mn(2+): glutamate 51, aspartate 89, and glutamate 102. Lysine 115 is an active-site residue. The region spanning 1177 to 1373 (LSMKLNVSLA…YMSDQLNKFV (197 aa)) is the RdRp catalytic domain. Aspartate 1335 is a Mg(2+) binding site.

The protein belongs to the Bunyavirales RNA polymerase family. In terms of assembly, homomultimer; the oligomeric structure is essential for the polymerase activity. Interacts with nucleoprotein N. Interacts with protein Z; this interaction inhibits viral transcription and replication, Z partially blocks the product exit tunnel for the releasing nascent RNA product. Mn(2+) is required as a cofactor. It depends on Mg(2+) as a cofactor.

Its subcellular location is the virion. The protein localises to the host cytoplasm. The enzyme catalyses RNA(n) + a ribonucleoside 5'-triphosphate = RNA(n+1) + diphosphate. In terms of biological role, RNA-dependent RNA polymerase, which is responsible for the replication and transcription of the viral RNA genome using antigenomic RNA as an intermediate. During transcription, synthesizes subgenomic RNAs and assures their capping by a cap-snatching mechanism, which involves the endonuclease activity cleaving the host capped pre-mRNAs. These short capped RNAs are then used as primers for viral transcription. The 3'-end of subgenomic mRNAs molecules are heterogeneous and not polyadenylated. The replicase function is to direct synthesis of antigenomic and genomic RNA which are encapsidated and non capped. As a consequence of the use of the same enzyme for both transcription and replication, these mechanisms need to be well coordinated. These processes may be regulated by proteins N and Z in a dose-dependent manner. Z protein inhibits the viral polymerase L und thus the viral transcription and RNA synthesis. In Homo sapiens (Human), this protein is RNA-directed RNA polymerase L.